The sequence spans 119 residues: Small ribosomal subunit protein bS16 (119 aa).

The tract at residues 81 to 119 is disordered; the sequence is GLAKRPARNNPKKAEPGQKAKERAAARAEKAGAGDDAAA. A compositionally biased stretch (basic and acidic residues) spans 92-113; that stretch reads KKAEPGQKAKERAAARAEKAGA.

This sequence belongs to the bacterial ribosomal protein bS16 family.

In Methylobacterium sp. (strain 4-46), this protein is Small ribosomal subunit protein bS16.